Reading from the N-terminus, the 213-residue chain is FMN-dependent NADH:quinone oxidoreductase (213 aa).

Serine 10 provides a ligand contact to FMN.

The protein belongs to the azoreductase type 1 family. Homodimer. It depends on FMN as a cofactor.

It carries out the reaction 2 a quinone + NADH + H(+) = 2 a 1,4-benzosemiquinone + NAD(+). It catalyses the reaction N,N-dimethyl-1,4-phenylenediamine + anthranilate + 2 NAD(+) = 2-(4-dimethylaminophenyl)diazenylbenzoate + 2 NADH + 2 H(+). Quinone reductase that provides resistance to thiol-specific stress caused by electrophilic quinones. In terms of biological role, also exhibits azoreductase activity. Catalyzes the reductive cleavage of the azo bond in aromatic azo compounds to the corresponding amines. In Opitutus terrae (strain DSM 11246 / JCM 15787 / PB90-1), this protein is FMN-dependent NADH:quinone oxidoreductase.